Reading from the N-terminus, the 133-residue chain is Holo-[acyl-carrier-protein] synthase (133 aa).

The Mg(2+) site is built by aspartate 8 and glutamate 56.

Belongs to the P-Pant transferase superfamily. AcpS family. Mg(2+) serves as cofactor.

The protein localises to the cytoplasm. The catalysed reaction is apo-[ACP] + CoA = holo-[ACP] + adenosine 3',5'-bisphosphate + H(+). In terms of biological role, transfers the 4'-phosphopantetheine moiety from coenzyme A to a Ser of acyl-carrier-protein. In Clostridium perfringens (strain SM101 / Type A), this protein is Holo-[acyl-carrier-protein] synthase.